Here is a 247-residue protein sequence, read N- to C-terminus: SPX domain-containing protein 5 (247 aa).

An SPX domain is found at M1 to A139. The disordered stretch occupies residues S224–T247. A compositionally biased stretch (pro residues) spans Q232–S241.

The polypeptide is SPX domain-containing protein 5 (SPX5) (Oryza sativa subsp. indica (Rice)).